We begin with the raw amino-acid sequence, 140 residues long: Lysozyme B (140 aa).

The N-terminal stretch at 1–18 (MKAFIVLVALALAAPALG) is a signal peptide. The region spanning 19–140 (RTMDRCSLAR…GWLPSIDDCF (122 aa)) is the C-type lysozyme domain. Cystine bridges form between Cys24–Cys139, Cys45–Cys129, Cys80–Cys96, and Cys92–Cys110. Residues Glu50 and Asp68 contribute to the active site.

It belongs to the glycosyl hydrolase 22 family. In terms of tissue distribution, found in the midgut.

It catalyses the reaction Hydrolysis of (1-&gt;4)-beta-linkages between N-acetylmuramic acid and N-acetyl-D-glucosamine residues in a peptidoglycan and between N-acetyl-D-glucosamine residues in chitodextrins.. Unlikely to play an active role in the humoral immune defense. May have a function in the digestion of bacteria in the food. This Drosophila melanogaster (Fruit fly) protein is Lysozyme B (LysB).